A 634-amino-acid chain; its full sequence is MRGLLLAGALALPASVFAHPAHQSYGLNRRTVDLNAFRLKSLAKYVNATETVIEAPSSFAPFKQQSYVEAATQHVKMIAPDATFRVVDDHYVGDNGVAHVHFRQTANGLDIDNADFNVNVGKDGKVFSYGNSFYTGQIPSSAALTKRDFSDPVTALKGTTNTLQLPITVDSASSESTEGKESYVFKGVSGTVSDPKANLVYFVKDDGTLALTWRVETDIDSNWLLTYIDAKSGEQIHGVVDYVAEADYQVYAWGINDPTEGERTVVKDPWDSAASEFTWISDGSTKYTTSRGNNGIAQSNPNGGSSYLNNYRPSSSSLSFKYPYSPSSSPPSSYIDASIIQLFYTANTYHDLLYTLGFNEKAGNFEYNTNGQGGRGNDYVILNAQDGSGTNNANFATPPDGQPGRMRMYVWTESTPYRDGSFEAGIVIHEYTHGLSTRLTGGPANSNCLNALESGGMGEGWGDFMATAIRLKPGDKRSTDYTMGEWAANRPGGIRQYPYSTSMSTNPLTYTSVNSLNAVHAIGTVWATMLYEVMWNLIDKHGKNDAPKPTLRDGVPTDGKYLAMKLVIDGMALQPCNPNFVQARDAILDADTALTGGENQCEIWKAFAKRGLGAGAQYSSRNRVGSTEVPSGVC.

Positions 1-18 (MRGLLLAGALALPASVFA) are cleaved as a signal peptide. A propeptide spanning residues 19–245 (HPAHQSYGLN…IHGVVDYVAE (227 aa)) is cleaved from the precursor. His429 provides a ligand contact to Zn(2+). The active site involves Glu430. Zn(2+) is bound at residue His433.

The protein belongs to the peptidase M36 family. The cofactor is Zn(2+).

It localises to the secreted. In terms of biological role, secreted metalloproteinase that allows assimilation of proteinaceous substrates and probably acts as a virulence factor. This chain is Extracellular metalloproteinase MEP (MEP), found in Neosartorya fischeri (strain ATCC 1020 / DSM 3700 / CBS 544.65 / FGSC A1164 / JCM 1740 / NRRL 181 / WB 181) (Aspergillus fischerianus).